The following is a 746-amino-acid chain: Alpha-1,4-glucan:maltose-1-phosphate maltosyltransferase (746 aa).

The interval 1 to 43 (MAAVQHRATTRTSNTDNSTTKTKSKATSARKSPATKRKRVSAE) is disordered. The span at 10–32 (TRTSNTDNSTTKTKSKATSARKS) shows a compositional bias: low complexity. Residues Lys-343, Gln-403, and Asp-438 each coordinate alpha-maltose 1-phosphate. Residue Asp-473 is the Nucleophile of the active site. Residue Asn-474 coordinates alpha-maltose 1-phosphate. Residue Glu-502 is the Proton donor of the active site. 612–613 (KY) is a binding site for alpha-maltose 1-phosphate.

The protein belongs to the glycosyl hydrolase 13 family. GlgE subfamily. As to quaternary structure, homodimer.

It catalyses the reaction alpha-maltose 1-phosphate + [(1-&gt;4)-alpha-D-glucosyl](n) = [(1-&gt;4)-alpha-D-glucosyl](n+2) + phosphate. Its function is as follows. Maltosyltransferase that uses maltose 1-phosphate (M1P) as the sugar donor to elongate linear or branched alpha-(1-&gt;4)-glucans. Is involved in a branched alpha-glucan biosynthetic pathway from trehalose, together with TreS, Mak and GlgB. The chain is Alpha-1,4-glucan:maltose-1-phosphate maltosyltransferase from Bifidobacterium longum (strain NCC 2705).